The following is a 306-amino-acid chain: 4-diphosphocytidyl-2-C-methyl-D-erythritol kinase (306 aa).

The active site involves Lys11. 98-108 (PIAGGMGGGSA) is an ATP binding site. The active site involves Asp140.

Belongs to the GHMP kinase family. IspE subfamily.

It catalyses the reaction 4-CDP-2-C-methyl-D-erythritol + ATP = 4-CDP-2-C-methyl-D-erythritol 2-phosphate + ADP + H(+). Its pathway is isoprenoid biosynthesis; isopentenyl diphosphate biosynthesis via DXP pathway; isopentenyl diphosphate from 1-deoxy-D-xylulose 5-phosphate: step 3/6. Its function is as follows. Catalyzes the phosphorylation of the position 2 hydroxy group of 4-diphosphocytidyl-2C-methyl-D-erythritol. In Leifsonia xyli subsp. xyli (strain CTCB07), this protein is 4-diphosphocytidyl-2-C-methyl-D-erythritol kinase.